Reading from the N-terminus, the 230-residue chain is MSPSQSPSVAQVQIESHVFPPTVKPPGTSKPFFLGGAGERGLEIQGKFIKFTAIGVYLEDSAIPSLAVKWKGKTAEELTDSVDFFRDIVSGPFEKFTQVTMILPLTGQQYSEKVTENCVAYWKAVGTYTDAEAKAIEKFIEVFKDETFPPGGSILFTQSPLGSLTIAFSKDGSLPETGTVVMENKQLSEAVLESIIGKHGVSPAAKKSLAARMSELLKEKPEAQTAAAAE.

Substrate-binding residues include Thr52, Asn117, and Ser194.

It belongs to the chalcone isomerase family.

It carries out the reaction a chalcone = a flavanone.. Its pathway is secondary metabolite biosynthesis; flavonoid biosynthesis. Its function is as follows. Catalyzes the intramolecular cyclization of bicyclic chalcones into tricyclic (S)-flavanones. Responsible for the isomerization of 4,2',4',6'-tetrahydroxychalcone (also termed chalcone) into naringenin. The protein is Chalcone--flavanone isomerase (CHI) of Camellia sinensis (Tea plant).